Consider the following 346-residue polypeptide: Biotin synthase (346 aa).

A Radical SAM core domain is found at R38–T256. [4Fe-4S] cluster-binding residues include C53, C57, and C60. [2Fe-2S] cluster is bound by residues C97, C128, C188, and R260.

This sequence belongs to the radical SAM superfamily. Biotin synthase family. Homodimer. [4Fe-4S] cluster is required as a cofactor. The cofactor is [2Fe-2S] cluster.

It carries out the reaction (4R,5S)-dethiobiotin + (sulfur carrier)-SH + 2 reduced [2Fe-2S]-[ferredoxin] + 2 S-adenosyl-L-methionine = (sulfur carrier)-H + biotin + 2 5'-deoxyadenosine + 2 L-methionine + 2 oxidized [2Fe-2S]-[ferredoxin]. The protein operates within cofactor biosynthesis; biotin biosynthesis; biotin from 7,8-diaminononanoate: step 2/2. Its function is as follows. Catalyzes the conversion of dethiobiotin (DTB) to biotin by the insertion of a sulfur atom into dethiobiotin via a radical-based mechanism. The sequence is that of Biotin synthase from Klebsiella pneumoniae (strain 342).